The following is a 637-amino-acid chain: Serine protease Hayan (637 aa).

The N-terminal stretch at 1–26 is a signal peptide; it reads MAMISARRYFLLGLLVLTTSAYVTVG. A Clip domain is found at 31 to 79; it reads PCQVRSDIPGICLSSSACENIRGYLKSGTLSTSQVPSCGFGAREEIICC. 3 disulfide bridges follow: C32/C78, C42/C68, and C48/C79. Disordered regions lie at residues 95–137, 152–178, 216–260, and 286–365; these read FHAT…LDEN, KPQK…SMKM, QRSF…NNNN, and LQTT…EKER. Residues 125-136 are compositionally biased toward basic and acidic residues; that stretch reads EGKRERESRLDE. Residues 234–244 show a composition bias toward polar residues; the sequence is PLTTPRSRPQR. The span at 245–260 shows a compositional bias: low complexity; that stretch reads PNNSNFNTNPSPNNNN. Positions 306 to 320 are enriched in basic and acidic residues; it reads EPYRFRGQDRDKDTQ. Residues 321–332 show a composition bias toward polar residues; it reads PQEPWNDVSNNL. 4 cysteine pairs are disulfide-bonded: C371–C497, C414–C430, C543–C567, and C578–C609. In terms of domain architecture, Peptidase S1 spans 385–632; the sequence is ILDGERVDRG…FLDYIEGIVW (248 aa). Residues H429 and D477 each act as charge relay system in the active site. Residue S582 is the Charge relay system of the active site.

The protein belongs to the peptidase S1 family. CLIP subfamily.

It is found in the secreted. Its function is as follows. Serine protease which, by converting prophenoloxidase 1 (PPO1) into its active form, plays an essential role in the melanization immune response to physical or septic wounding. May function in diverse PPO1-activating cascades that are negatively controlled by different serpin proteins; Spn27A and Spn28D in the hemolymph, and Spn28D and Spn77BA in the trachea. Also required in the systematic wound response by mediating the redox-dependent activation of the JNK cytoprotective cascade in neuronal tissues after integument wounding. This is Serine protease Hayan from Drosophila melanogaster (Fruit fly).